The chain runs to 341 residues: D-aspartate oxidase (341 aa).

Positions 36, 37, 43, 44, 50, 307, 311, and 312 each coordinate FAD. The Microbody targeting signal signature appears at 339–341; sequence SNL.

It belongs to the DAMOX/DASOX family. Monomer. Interacts with PEX5; the interaction is direct and required for localization of DDO to the peroxisome. Interacts with DAOA; the interaction is direct and increases the degradation rate of DDO. FAD serves as cofactor. Post-translationally, may be S-nitrosylated. In terms of tissue distribution, expressed in epithelial cells of the proximal nephron tubules in the renal cortex (at protein level). In the brain, expressed in the frontal, temporal, and occipital lobes of the cortex, hippocampus, striatum, diencephalon, brainstem, cerebellum, spinal cord, plexus choroiderus and ependyma (at protein level). Expression is increased in the prefrontal cortex of schizophrenic patients. Levels are normal in the superior frontal gyrus of patients with Alzheimer's disease.

Its subcellular location is the peroxisome matrix. The protein resides in the cytoplasm. The protein localises to the cytosol. It carries out the reaction D-aspartate + O2 + H2O = oxaloacetate + H2O2 + NH4(+). The catalysed reaction is D-glutamate + O2 + H2O = H2O2 + 2-oxoglutarate + NH4(+). Its activity is regulated as follows. Inhibited by the benzodiazepine olanzapine. Inhibited by aminooxyacetic acid, thiolactomycin, malonate and meso-tartrate. Clozapine, haloperidol and chlorpromazine have no effect on activity. Not inhibited by sodium, potassium, magnesium, iron, calcium, cobalt, copper, nickel, manganese or zinc ions. Not inhibited by AMP, ADP, ATP, or cAMP. Not inhibited by pyridoxal 5'-phosphate. Its function is as follows. Selectively catalyzes the oxidative deamination of acidic amino acids. Suppresses the level of D-aspartate in the brain, an amino acid that can act as an agonist for glutamate receptors. Protects the organism from the toxicity of D-amino acids. May also function in the intestine. In Homo sapiens (Human), this protein is D-aspartate oxidase (DDO).